Consider the following 160-residue polypeptide: 2-amino-4-hydroxy-6-hydroxymethyldihydropteridine pyrophosphokinase (160 aa).

It belongs to the HPPK family. As to quaternary structure, monomer.

The catalysed reaction is 6-hydroxymethyl-7,8-dihydropterin + ATP = (7,8-dihydropterin-6-yl)methyl diphosphate + AMP + H(+). It functions in the pathway cofactor biosynthesis; tetrahydrofolate biosynthesis; 2-amino-4-hydroxy-6-hydroxymethyl-7,8-dihydropteridine diphosphate from 7,8-dihydroneopterin triphosphate: step 4/4. Catalyzes the transfer of pyrophosphate from adenosine triphosphate (ATP) to 6-hydroxymethyl-7,8-dihydropterin, an enzymatic step in folate biosynthesis pathway. In Haemophilus influenzae (strain ATCC 51907 / DSM 11121 / KW20 / Rd), this protein is 2-amino-4-hydroxy-6-hydroxymethyldihydropteridine pyrophosphokinase (folK).